The chain runs to 419 residues: Gamma-glutamyl phosphate reductase (419 aa).

Belongs to the gamma-glutamyl phosphate reductase family.

Its subcellular location is the cytoplasm. The enzyme catalyses L-glutamate 5-semialdehyde + phosphate + NADP(+) = L-glutamyl 5-phosphate + NADPH + H(+). It participates in amino-acid biosynthesis; L-proline biosynthesis; L-glutamate 5-semialdehyde from L-glutamate: step 2/2. In terms of biological role, catalyzes the NADPH-dependent reduction of L-glutamate 5-phosphate into L-glutamate 5-semialdehyde and phosphate. The product spontaneously undergoes cyclization to form 1-pyrroline-5-carboxylate. This chain is Gamma-glutamyl phosphate reductase, found in Ruthia magnifica subsp. Calyptogena magnifica.